The following is a 58-amino-acid chain: UPF0391 membrane protein MADE_1011595 (58 aa).

2 helical membrane-spanning segments follow: residues 4-24 (WAIT…GGIA) and 27-47 (ATGI…ISLI).

It belongs to the UPF0391 family.

It localises to the cell membrane. This chain is UPF0391 membrane protein MADE_1011595, found in Alteromonas mediterranea (strain DSM 17117 / CIP 110805 / LMG 28347 / Deep ecotype).